The chain runs to 302 residues: Dihydroorotate dehydrogenase B (NAD(+)), catalytic subunit (302 aa).

Residues serine 20 and 44-45 each bind FMN; that span reads KG. Substrate contacts are provided by residues lysine 44 and 68–72; that span reads NSVGL. FMN-binding residues include asparagine 98 and asparagine 125. A substrate-binding site is contributed by asparagine 125. The active-site Nucleophile is cysteine 128. 2 residues coordinate FMN: lysine 163 and isoleucine 189. 190–191 is a binding site for substrate; sequence NT. Residues glycine 215, 241–242, and 263–264 contribute to the FMN site; these read GG and GT.

It belongs to the dihydroorotate dehydrogenase family. Type 1 subfamily. As to quaternary structure, heterotetramer of 2 PyrK and 2 PyrD type B subunits. FMN is required as a cofactor.

The protein resides in the cytoplasm. It catalyses the reaction (S)-dihydroorotate + NAD(+) = orotate + NADH + H(+). It participates in pyrimidine metabolism; UMP biosynthesis via de novo pathway; orotate from (S)-dihydroorotate (NAD(+) route): step 1/1. In terms of biological role, catalyzes the conversion of dihydroorotate to orotate with NAD(+) as electron acceptor. In Thermoanaerobacter pseudethanolicus (strain ATCC 33223 / 39E) (Clostridium thermohydrosulfuricum), this protein is Dihydroorotate dehydrogenase B (NAD(+)), catalytic subunit (pyrD).